The primary structure comprises 216 residues: Somatotropin (216 aa).

Positions 1 to 25 (MAPGSWFSPLLIAVVTLGLPQEAAA) are cleaved as a signal peptide. His45 contributes to the Zn(2+) binding site. Cys78 and Cys189 are disulfide-bonded. Residue Glu198 coordinates Zn(2+). Cysteines 206 and 214 form a disulfide.

This sequence belongs to the somatotropin/prolactin family.

The protein resides in the secreted. Functionally, growth hormone plays an important role in growth control. This is Somatotropin (GH) from Gallus gallus (Chicken).